The following is a 394-amino-acid chain: Flagellin A (394 aa).

It belongs to the bacterial flagellin family.

Its subcellular location is the secreted. It is found in the bacterial flagellum. In terms of biological role, flagellin is the subunit protein which polymerizes to form the filaments of bacterial flagella. Homomer of FlaA is able to form a functional filament. The polypeptide is Flagellin A (flaA) (Rhizobium meliloti (strain 1021) (Ensifer meliloti)).